The sequence spans 320 residues: Beta-ketoacyl-[acyl-carrier-protein] synthase III (320 aa).

Residues cysteine 112 and histidine 245 contribute to the active site. The tract at residues 246 to 250 (QANIR) is ACP-binding. Asparagine 275 is an active-site residue.

It belongs to the thiolase-like superfamily. FabH family. As to quaternary structure, homodimer.

Its subcellular location is the cytoplasm. It catalyses the reaction malonyl-[ACP] + acetyl-CoA + H(+) = 3-oxobutanoyl-[ACP] + CO2 + CoA. It participates in lipid metabolism; fatty acid biosynthesis. Catalyzes the condensation reaction of fatty acid synthesis by the addition to an acyl acceptor of two carbons from malonyl-ACP. Catalyzes the first condensation reaction which initiates fatty acid synthesis and may therefore play a role in governing the total rate of fatty acid production. Possesses both acetoacetyl-ACP synthase and acetyl transacylase activities. Its substrate specificity determines the biosynthesis of branched-chain and/or straight-chain of fatty acids. This chain is Beta-ketoacyl-[acyl-carrier-protein] synthase III, found in Streptococcus thermophilus (strain ATCC BAA-250 / LMG 18311).